The sequence spans 452 residues: Ribosomal protein uS12 methylthiotransferase RimO (452 aa).

An MTTase N-terminal domain is found at 5-116; sequence PTIAFSHLGC…IVDVLQRTES (112 aa). [4Fe-4S] cluster contacts are provided by Cys-14, Cys-50, Cys-79, Cys-154, Cys-158, and Cys-161. The region spanning 140-369 is the Radical SAM core domain; the sequence is TTTSAVAYLR…MATQQPIAER (230 aa). The TRAM domain occupies 372–438; that stretch reads RAQIGRLVDV…IYDLHGEVAS (67 aa).

Belongs to the methylthiotransferase family. RimO subfamily. [4Fe-4S] cluster is required as a cofactor.

The protein localises to the cytoplasm. It catalyses the reaction L-aspartate(89)-[ribosomal protein uS12]-hydrogen + (sulfur carrier)-SH + AH2 + 2 S-adenosyl-L-methionine = 3-methylsulfanyl-L-aspartate(89)-[ribosomal protein uS12]-hydrogen + (sulfur carrier)-H + 5'-deoxyadenosine + L-methionine + A + S-adenosyl-L-homocysteine + 2 H(+). Catalyzes the methylthiolation of an aspartic acid residue of ribosomal protein uS12. This chain is Ribosomal protein uS12 methylthiotransferase RimO, found in Synechococcus elongatus (strain ATCC 33912 / PCC 7942 / FACHB-805) (Anacystis nidulans R2).